The following is a 241-amino-acid chain: Sugar fermentation stimulation protein homolog (241 aa).

Belongs to the SfsA family.

In Hahella chejuensis (strain KCTC 2396), this protein is Sugar fermentation stimulation protein homolog.